The primary structure comprises 341 residues: Limbic system-associated membrane protein (341 aa).

A signal peptide spans 1–28 (MVGRVQPDRKQLPLVLLRLLCLLPTGLP). Ig-like domains lie at 29–122 (VRSV…PKTS), 132–214 (PKIS…VKVT), and 219–304 (PTIT…ASLV). N40 and N66 each carry an N-linked (GlcNAc...) asparagine glycan. Cysteines 53 and 111 form a disulfide. Y94 is modified (phosphotyrosine). N-linked (GlcNAc...) asparagine glycosylation is found at N136 and N148. Cystine bridges form between C153–C197 and C239–C290. N-linked (GlcNAc...) asparagine glycosylation is found at N279, N287, and N300.

This sequence belongs to the immunoglobulin superfamily. IgLON family.

It localises to the cell membrane. Mediates selective neuronal growth and axon targeting. Contributes to the guidance of developing axons and remodeling of mature circuits in the limbic system. Essential for normal growth of the hippocampal mossy fiber projection. This Mus musculus (Mouse) protein is Limbic system-associated membrane protein (Lsamp).